A 381-amino-acid polypeptide reads, in one-letter code: Arf-GAP with dual PH domain-containing protein 2 (381 aa).

One can recognise an Arf-GAP domain in the interval 9–131; the sequence is KRLLELLRAP…FMADGETISL (123 aa). Residues 25–48 form a C4-type zinc finger; that stretch reads CADCGAADPDWASYKLGIFICLNC. PH domains are found at residues 132 to 233 and 255 to 361; these read PGNR…AARL and NYLK…GVLS.

In terms of tissue distribution, highly expressed in placenta, spleen, kidney, skeletal muscle and adrenal gland. Weakly expressed in thyroid, liver, heart, lung, small intestine, peripheral blood leukocytes. Not detected in spinal cord, brain, stomach, trachea, colon, lymph node and bone marrow.

The protein localises to the cytoplasm. It localises to the cell membrane. Functionally, GTPase-activating protein for the ADP ribosylation factor family (Potential). Binds phosphatidylinositol 3,4,5-trisphosphate (PtdInsP3) and inositol 1,3,4,5-tetrakisphosphate (InsP4). Possesses a stoichiometry of two binding sites for InsP4 with identical affinity. This chain is Arf-GAP with dual PH domain-containing protein 2 (ADAP2), found in Homo sapiens (Human).